Reading from the N-terminus, the 317-residue chain is Ribosomal RNA small subunit methyltransferase H (317 aa).

S-adenosyl-L-methionine contacts are provided by residues 30 to 32 (GGH), D50, Y78, D95, and Q102.

This sequence belongs to the methyltransferase superfamily. RsmH family.

The protein localises to the cytoplasm. The catalysed reaction is cytidine(1402) in 16S rRNA + S-adenosyl-L-methionine = N(4)-methylcytidine(1402) in 16S rRNA + S-adenosyl-L-homocysteine + H(+). Its function is as follows. Specifically methylates the N4 position of cytidine in position 1402 (C1402) of 16S rRNA. This Nitrosomonas eutropha (strain DSM 101675 / C91 / Nm57) protein is Ribosomal RNA small subunit methyltransferase H.